A 347-amino-acid polypeptide reads, in one-letter code: NADH-ubiquinone oxidoreductase chain 2 (347 aa).

A run of 11 helical transmembrane segments spans residues 1-21 (MNPLIFTTIVLTIIMGTMIVM), 25-45 (HWLTVWIGFEMNMLAVIPILM), 59-79 (YFLTQATASMLLMLAIIINLL), 96-116 (IIMTLAMAMKLGLSPFHFWVP), 122-142 (IQLSSGLILLTWQKLAPMSIL), 145-165 (IFPTINLNLMLLMSVLSVAIG), 178-198 (IMAYSSIAHMGWMTAIMAYNP), 201-221 (TLLNLVIYILLTTTTFMMFML), 237-257 (APLLTMTILTIMLSMGGLPPL), 276-296 (IITPTIMAVTALLNLYFYMRL), and 326-346 (VSPLIILSTLALPLSPILMLL).

Belongs to the complex I subunit 2 family. In terms of assembly, core subunit of respiratory chain NADH dehydrogenase (Complex I) which is composed of 45 different subunits. Interacts with TMEM242.

The protein localises to the mitochondrion inner membrane. The enzyme catalyses a ubiquinone + NADH + 5 H(+)(in) = a ubiquinol + NAD(+) + 4 H(+)(out). Functionally, core subunit of the mitochondrial membrane respiratory chain NADH dehydrogenase (Complex I) which catalyzes electron transfer from NADH through the respiratory chain, using ubiquinone as an electron acceptor. Essential for the catalytic activity and assembly of complex I. This chain is NADH-ubiquinone oxidoreductase chain 2, found in Boneia bidens (Manado fruit bat).